Reading from the N-terminus, the 197-residue chain is Phosphoheptose isomerase (197 aa).

The 162-residue stretch at 36 to 197 folds into the SIS domain; it reads MVNALLNEGK…IDRQLFGSEE (162 aa). A substrate-binding site is contributed by 51-53; sequence NGG. 2 residues coordinate Zn(2+): His60 and Glu64. Residues Glu64, 93–94, 119–121, Ser124, and Gln174 contribute to the substrate site; these read ND and STS. Gln174 and His182 together coordinate Zn(2+).

The protein belongs to the SIS family. GmhA subfamily. Homotetramer. It depends on Zn(2+) as a cofactor.

The protein localises to the cytoplasm. The enzyme catalyses 2 D-sedoheptulose 7-phosphate = D-glycero-alpha-D-manno-heptose 7-phosphate + D-glycero-beta-D-manno-heptose 7-phosphate. Its pathway is carbohydrate biosynthesis; D-glycero-D-manno-heptose 7-phosphate biosynthesis; D-glycero-alpha-D-manno-heptose 7-phosphate and D-glycero-beta-D-manno-heptose 7-phosphate from sedoheptulose 7-phosphate: step 1/1. Its function is as follows. Catalyzes the isomerization of sedoheptulose 7-phosphate in D-glycero-D-manno-heptose 7-phosphate. This chain is Phosphoheptose isomerase, found in Pseudomonas aeruginosa (strain LESB58).